We begin with the raw amino-acid sequence, 187 residues long: MNGDDAFAKRPRDDDKASEKRSKAFNDIATYFSKKEWEKMKYSEKISYVYMKRNYEAMTKLGFNVTLPPFMCNKQATDFQGNYFDNDRNRRIQVERPQMTFGRLQRIIPKIMPKKPAEEGNDSKGVSEASGPQNDGKQLAPGKANTSEKINKRSGPKRGRHAWTHRLRERNQLVIYEEIRDPEEDDE.

Disordered stretches follow at residues 1–21 (MNGD…SEKR) and 109–187 (PKIM…EDDE). The 64-residue stretch at 20-83 (KRSKAFNDIA…KQATDFQGNY (64 aa)) folds into the KRAB-related domain. Ser-123 carries the phosphoserine modification. A compositionally biased stretch (basic residues) spans 152-168 (KRSGPKRGRHAWTHRLR).

Belongs to the SSX family. In terms of tissue distribution, not detected in any normal or tumor tissues.

Its function is as follows. Could act as a modulator of transcription. In Homo sapiens (Human), this protein is Putative protein SSX8.